Here is a 542-residue protein sequence, read N- to C-terminus: Propane 2-monooxygenase, hydroxylase component large subunit (542 aa).

6 residues coordinate Fe cation: Glu-97, Glu-127, His-130, Glu-192, Glu-226, and His-229.

This sequence belongs to the TmoA/XamoA family. As to quaternary structure, the propane 2-monooxygenase multicomponent enzyme system is composed of an electron transfer component and a monooxygenase component interacting with the effector protein MimD. The electron transfer component is composed of a reductase (MimB), and the monooxygenase component is formed by a large subunit (MimA) and a small subunit (MimC). Requires the presence of the chaperonin-like protein MimG to ensure a productive folding, resulting of a soluble MimA, which leads to the active form of MimABCD. Requires Fe(2+) as cofactor.

It catalyses the reaction propane + NADH + O2 + H(+) = propan-2-ol + NAD(+) + H2O. The enzyme catalyses acetone + NADH + O2 + H(+) = hydroxyacetone + NAD(+) + H2O. The catalysed reaction is butan-2-one + NADH + O2 + H(+) = 1-hydroxy-2-butanone + NAD(+) + H2O. It carries out the reaction phenol + NADH + O2 + H(+) = hydroquinone + NAD(+) + H2O. Component of the propane 2-monooxygenase multicomponent enzyme system which is involved in the degradation of propane via the O2-dependent hydroxylation of propane. Also involved in the degradation of acetone via the O2-dependent hydroxylation of acetone. Also able to catalyze the oxidation of phenol, methylethylketone (2-butanone), 1-propanol and 2-propanol. This is Propane 2-monooxygenase, hydroxylase component large subunit from Mycolicibacterium goodii (Mycobacterium goodii).